The chain runs to 726 residues: Disintegrin and metalloproteinase domain-containing protein 20 (726 aa).

Residues 1-31 (MAVGEPLVHIRVTLLLLWFGMFLSISGHSQA) form the signal peptide. Positions 32-206 (RPSQYFTSPE…SSFVGWWTHQ (175 aa)) are excised as a propeptide. A Cysteine switch motif is present at residues 171–178 (MRCGLTEE). Residue Cys173 coordinates Zn(2+). N-linked (GlcNAc...) asparagine glycosylation is found at Asn191 and Asn226. Residues 207–400 (RFVELVVVVD…SGLCIQPPPY (194 aa)) form the Peptidase M12B domain. Residues 207 to 693 (RFVELVVVVD…GLNVMGKLRY (487 aa)) are Extracellular-facing. 3 disulfide bridges follow: Cys317-Cys394, Cys357-Cys379, and Cys359-Cys364. Zn(2+) is bound at residue His342. Glu343 is an active-site residue. 2 residues coordinate Zn(2+): His346 and His352. N-linked (GlcNAc...) asparagine glycosylation is found at Asn378, Asn438, Asn479, and Asn587. The region spanning 407-493 (LKYCGNLVVE…QCPDDVYVQD (87 aa)) is the Disintegrin domain. An intrachain disulfide couples Cys465 to Cys485. Cystine bridges form between Cys635-Cys646, Cys640-Cys652, and Cys654-Cys663. Positions 635-663 (CQPKTCNMRGICNNKQHCHCNHEWAPPYC) constitute an EGF-like domain. The chain crosses the membrane as a helical span at residues 694–714 (LSLLCLLPLVAFLLFCLHVLF). Residues 715–726 (KKRTKSKEDEEG) are Cytoplasmic-facing.

It depends on Zn(2+) as a cofactor. Has no obvious cleavage site for furin endopeptidase, suggesting that the proteolytic processing is regulated. As to expression, testis specific.

The protein localises to the membrane. Functionally, may be involved in sperm maturation and/or fertilization. The polypeptide is Disintegrin and metalloproteinase domain-containing protein 20 (ADAM20) (Homo sapiens (Human)).